A 209-amino-acid chain; its full sequence is MAKDLDELLDEVETKFCRLDPLRLDLGERPKGDGGGGSHSGDRNGAQEKETLRSTETFKKEDDLDSLINEIFEEPDFDRKSFQKFKSKSSSNTCVRAPMQGVSKSCSPVYLSGSAIPCGIGTNTSQRACDRLRCVACDFRIVSYNDYMWDKSCDYLFFRNNMPEFHKLKTKLIEKKGARAYACQCSWRTVEELTDLQTDHQLRWVCGKH.

A required for interaction with FAM161A region spans residues 1 to 76 (MAKDLDELLD…LINEIFEEPD (76 aa)). The segment at 24 to 58 (LDLGERPKGDGGGGSHSGDRNGAQEKETLRSTETF) is disordered. Basic and acidic residues predominate over residues 40–58 (SGDRNGAQEKETLRSTETF).

In terms of assembly, interacts (via N-terminus) with FAM161A (via central region); the interaction is direct. Expressed in multiple tissues, including the brain, kidney, lung, spleen, heart, trachea and testis. Expressed in the retina (at protein level).

The protein localises to the cytoplasm. Its subcellular location is the photoreceptor inner segment. Its function is as follows. May be involved in photoreceptor outer segment disk morphogenesis. In Mus musculus (Mouse), this protein is Cilia- and flagella-associated protein 418.